Consider the following 67-residue polypeptide: Protein AaeX (67 aa).

A run of 2 helical transmembrane segments spans residues 3–23 and 39–59; these read LLPVMVIFGLSFPPIFLELLI and GIYEFVWHPALFNTALYCCLF.

The protein belongs to the AaeX family.

It localises to the cell membrane. This is Protein AaeX from Yersinia pseudotuberculosis serotype O:1b (strain IP 31758).